The sequence spans 760 residues: Catalase-peroxidase (760 aa).

The N-terminal stretch at 1–45 (MKGTPFRSPHLYQEGSSCMHRTIRSVAAVLTVVLSATIPMVPAWS) is a signal peptide. Residues 124–245 (WHGAGTYRTY…LAATQMGLIY (122 aa)) constitute a cross-link (tryptophyl-tyrosyl-methioninium (Trp-Tyr) (with M-271)). Histidine 125 serves as the catalytic Proton acceptor. The segment at residues 245-271 (YVNPEGPNGVPDPVAAARDIREAFGGM) is a cross-link (tryptophyl-tyrosyl-methioninium (Tyr-Met) (with W-124)). A heme b-binding site is contributed by histidine 286.

It belongs to the peroxidase family. Peroxidase/catalase subfamily. In terms of assembly, homodimer or homotetramer. It depends on heme b as a cofactor. Formation of the three residue Trp-Tyr-Met cross-link is important for the catalase, but not the peroxidase activity of the enzyme.

The enzyme catalyses H2O2 + AH2 = A + 2 H2O. It carries out the reaction 2 H2O2 = O2 + 2 H2O. In terms of biological role, bifunctional enzyme with both catalase and broad-spectrum peroxidase activity. This is Catalase-peroxidase from Granulibacter bethesdensis (strain ATCC BAA-1260 / CGDNIH1).